The sequence spans 234 residues: Orotidine 5'-phosphate decarboxylase (234 aa).

Residues D10, K32, D59–T68, T119, R180, Q189, G209, and R210 contribute to the substrate site. The Proton donor role is filled by K61.

The protein belongs to the OMP decarboxylase family. Type 1 subfamily. As to quaternary structure, homodimer.

It catalyses the reaction orotidine 5'-phosphate + H(+) = UMP + CO2. The protein operates within pyrimidine metabolism; UMP biosynthesis via de novo pathway; UMP from orotate: step 2/2. Its function is as follows. Catalyzes the decarboxylation of orotidine 5'-monophosphate (OMP) to uridine 5'-monophosphate (UMP). The protein is Orotidine 5'-phosphate decarboxylase of Mannheimia succiniciproducens (strain KCTC 0769BP / MBEL55E).